The chain runs to 436 residues: UPF0597 protein YhaM (436 aa).

It belongs to the UPF0597 family.

The polypeptide is UPF0597 protein YhaM (Shigella boydii serotype 4 (strain Sb227)).